We begin with the raw amino-acid sequence, 101 residues long: Small ribosomal subunit protein uS14 (101 aa).

Belongs to the universal ribosomal protein uS14 family. In terms of assembly, part of the 30S ribosomal subunit. Contacts proteins S3 and S10.

In terms of biological role, binds 16S rRNA, required for the assembly of 30S particles and may also be responsible for determining the conformation of the 16S rRNA at the A site. The polypeptide is Small ribosomal subunit protein uS14 (Methylococcus capsulatus (strain ATCC 33009 / NCIMB 11132 / Bath)).